Here is a 296-residue protein sequence, read N- to C-terminus: Ribonuclease HIII (296 aa).

The region spanning 81 to 296 (QAMIGTDEVG…TQKAKQLLER (216 aa)) is the RNase H type-2 domain. Residues D87, E88, and D190 each contribute to the a divalent metal cation site.

Belongs to the RNase HII family. RnhC subfamily. Requires Mn(2+) as cofactor. It depends on Mg(2+) as a cofactor.

It is found in the cytoplasm. The catalysed reaction is Endonucleolytic cleavage to 5'-phosphomonoester.. Functionally, endonuclease that specifically degrades the RNA of RNA-DNA hybrids. The protein is Ribonuclease HIII of Streptococcus gordonii (strain Challis / ATCC 35105 / BCRC 15272 / CH1 / DL1 / V288).